A 291-amino-acid chain; its full sequence is Small ribosomal subunit protein uS2 (291 aa).

The interval 254 to 291 is disordered; it reads RTSNRDNKNNKNNNNTDNTDNAASIKEEDLIGGSNNEN. Residues 263 to 277 show a composition bias toward low complexity; sequence NKNNNNTDNTDNAAS.

Belongs to the universal ribosomal protein uS2 family.

The protein is Small ribosomal subunit protein uS2 of Ehrlichia canis (strain Jake).